We begin with the raw amino-acid sequence, 314 residues long: L-lactate dehydrogenase 1 (314 aa).

NAD(+) is bound by residues V16, D37, K42, Y68, and 82 to 83 (GL). Residues Q85, R91, and 123–126 (NPVD) contribute to the substrate site. NAD(+) contacts are provided by residues 121–123 (ATN) and S146. 151–154 (DSAR) contacts substrate. 2 residues coordinate beta-D-fructose 1,6-bisphosphate: R156 and H171. H178 functions as the Proton acceptor in the catalytic mechanism. At Y223 the chain carries Phosphotyrosine. A substrate-binding site is contributed by T232.

It belongs to the LDH/MDH superfamily. LDH family. In terms of assembly, homotetramer.

It localises to the cytoplasm. It catalyses the reaction (S)-lactate + NAD(+) = pyruvate + NADH + H(+). Its pathway is fermentation; pyruvate fermentation to lactate; (S)-lactate from pyruvate: step 1/1. Its activity is regulated as follows. Allosterically activated by fructose 1,6-bisphosphate (FBP). In terms of biological role, catalyzes the conversion of lactate to pyruvate. This Bacillus cereus (strain ATCC 14579 / DSM 31 / CCUG 7414 / JCM 2152 / NBRC 15305 / NCIMB 9373 / NCTC 2599 / NRRL B-3711) protein is L-lactate dehydrogenase 1.